The sequence spans 85 residues: Conotoxin Cap15b (85 aa).

The N-terminal stretch at 1–23 (MEKLTFLILVATVLLTIHVLVQS) is a signal peptide. The propeptide occupies 24–49 (DGDKHLKRRPKQYATKRLSALMRGHR). The residue at position 50 (Gln50) is a Pyrrolidone carboxylic acid.

It belongs to the conotoxin O2 superfamily. In terms of processing, contains 4 disulfide bonds. As to expression, expressed by the venom duct.

The protein localises to the secreted. The sequence is that of Conotoxin Cap15b from Conus capitaneus (Captain cone).